The following is a 349-amino-acid chain: Protein POOR HOMOLOGOUS SYNAPSIS 1 (349 aa).

It is found in the cytoplasm. Required for accurate chromosome segregation in meiosis. Required for pairing to occur between homologous chromosomes. Acts in early recombination steps and ensures pairing fidelity and proper repair of meiotic DNA double-strand-breaks. Regulates recombination and pairing of homologous chromosomes during meiotic prophase by controlling transport of RAD50 from cytoplasm to the nucleus. May affect pairing of the gene-rich fraction of the genome rather than preventing pairing between repetitive DNA elements. This Arabidopsis thaliana (Mouse-ear cress) protein is Protein POOR HOMOLOGOUS SYNAPSIS 1.